The following is a 159-amino-acid chain: Probable cyclic pyranopterin monophosphate synthase (159 aa).

Substrate is bound by residues 74–76 (MCH) and 110–111 (ME). Residue Asp-125 is part of the active site.

This sequence belongs to the MoaC family. In terms of assembly, homohexamer; trimer of dimers.

It catalyses the reaction (8S)-3',8-cyclo-7,8-dihydroguanosine 5'-triphosphate = cyclic pyranopterin phosphate + diphosphate. The protein operates within cofactor biosynthesis; molybdopterin biosynthesis. Catalyzes the conversion of (8S)-3',8-cyclo-7,8-dihydroguanosine 5'-triphosphate to cyclic pyranopterin monophosphate (cPMP). This is Probable cyclic pyranopterin monophosphate synthase from Methanococcoides burtonii (strain DSM 6242 / NBRC 107633 / OCM 468 / ACE-M).